Here is a 283-residue protein sequence, read N- to C-terminus: Protease HtpX (283 aa).

The next 2 helical transmembrane spans lie at 4-24 (ILLFLATNMAVMLVLGIILSV) and 33-53 (GGILIMALLFGFAGSLISLFL). Residue H139 participates in Zn(2+) binding. The active site involves E140. H143 serves as a coordination point for Zn(2+). A run of 2 helical transmembrane segments spans residues 147–167 (GDMVTMALLQGVLNTFVIFLS) and 190–210 (IYFLVSMVLEMLFGVLASIIA). E218 lines the Zn(2+) pocket.

The protein belongs to the peptidase M48B family. Zn(2+) serves as cofactor.

Its subcellular location is the cell inner membrane. This chain is Protease HtpX, found in Haemophilus influenzae (strain PittGG).